The primary structure comprises 282 residues: Digeranylgeranylglyceryl phosphate synthase (282 aa).

The next 9 membrane-spanning stretches (helical) occupy residues 15 to 35, 36 to 56, 81 to 100, 104 to 121, 131 to 151, 159 to 179, 201 to 221, 222 to 242, and 260 to 280; these read VIGA…WYLE, LKGI…GYVI, VNKA…ALSI, IYAL…IYYA, GNLL…LAFF, IIIP…VKGI, KSWR…PLPF, FIGF…PFTI, and YLKI…LPFF.

The protein belongs to the UbiA prenyltransferase family. DGGGP synthase subfamily. The cofactor is Mg(2+). Requires Ca(2+) as cofactor.

It localises to the cell membrane. The catalysed reaction is sn-3-O-(geranylgeranyl)glycerol 1-phosphate + (2E,6E,10E)-geranylgeranyl diphosphate = 2,3-bis-O-(geranylgeranyl)-sn-glycerol 1-phosphate + diphosphate. The protein operates within membrane lipid metabolism; glycerophospholipid metabolism. Inhibited by EDTA in vitro. In terms of biological role, prenyltransferase that catalyzes the transfer of the geranylgeranyl moiety of geranylgeranyl diphosphate (GGPP) to the C2 hydroxyl of (S)-3-O-geranylgeranylglyceryl phosphate (GGGP). This reaction is the second ether-bond-formation step in the biosynthesis of archaeal membrane lipids. Cannot use other prenyl donors, i.e. farnesyl diphosphate (FPP) and phytyl diphosphate. Moreover, 4-hydroxybenzoate, 1,4-dihydroxy 2-naphthoate, homogentisate, and alpha-glycerophosphate do not function as prenyl acceptor substrates. The protein is Digeranylgeranylglyceryl phosphate synthase (ubiA-2) of Saccharolobus solfataricus (strain ATCC 35092 / DSM 1617 / JCM 11322 / P2) (Sulfolobus solfataricus).